The primary structure comprises 769 residues: DNA gyrase subunit B (769 aa).

The Toprim domain occupies 414-528 (SEIYLVEGDS…NGHIYLAQPP (115 aa)). Residues Glu420, Asp493, and Asp495 each coordinate Mg(2+).

This sequence belongs to the type II topoisomerase GyrB family. Heterotetramer, composed of two GyrA and two GyrB chains. In the heterotetramer, GyrA contains the active site tyrosine that forms a transient covalent intermediate with DNA, while GyrB binds cofactors and catalyzes ATP hydrolysis. Mg(2+) serves as cofactor. It depends on Mn(2+) as a cofactor. The cofactor is Ca(2+).

It localises to the cytoplasm. It catalyses the reaction ATP-dependent breakage, passage and rejoining of double-stranded DNA.. Functionally, a type II topoisomerase that negatively supercoils closed circular double-stranded (ds) DNA in an ATP-dependent manner to modulate DNA topology and maintain chromosomes in an underwound state. Negative supercoiling favors strand separation, and DNA replication, transcription, recombination and repair, all of which involve strand separation. Also able to catalyze the interconversion of other topological isomers of dsDNA rings, including catenanes and knotted rings. Type II topoisomerases break and join 2 DNA strands simultaneously in an ATP-dependent manner. The protein is DNA gyrase subunit B of Campylobacter jejuni subsp. jejuni serotype O:2 (strain ATCC 700819 / NCTC 11168).